The following is a 141-amino-acid chain: Protein MGF 100-2L (141 aa).

It belongs to the asfivirus MGF 100 family.

Its function is as follows. Plays a role in virus cell tropism, and may be required for efficient virus replication in macrophages. The sequence is that of Protein MGF 100-2L from African swine fever virus (isolate Tick/South Africa/Pretoriuskop Pr4/1996) (ASFV).